We begin with the raw amino-acid sequence, 352 residues long: Zinc finger protein 185 (352 aa).

2 disordered regions span residues 1 to 73 (MTTE…ELQS) and 86 to 121 (DVLPEKNQEPPALARPDSGLSSSTTEKIAHRQITPP). Residue S18 is modified to Phosphoserine. Residues 61–72 (KKTTSSPTQELQ) show a composition bias toward polar residues. Residue T137 is modified to Phosphothreonine. A compositionally biased stretch (polar residues) spans 251-268 (VSSGKPVSSHCDSPSSIE). Residues 251–287 (VSSGKPVSSHCDSPSSIEDSLDLAKKPPHEGTPSERP) form a disordered region. Residues 272-287 (DLAKKPPHEGTPSERP) are compositionally biased toward basic and acidic residues. Positions 292-347 (CTYCSHEIQDCPKITLEHLGICCHEYCFKCGICNKPMGDLLDQIFIHRDTIHCGKC) constitute an LIM zinc-binding domain.

As to expression, expressed in skin, kidney, ovary, testis. Also expressed in brain, cartilage, heart, lung, spleen and thymus.

Its subcellular location is the cytoplasm. It localises to the cytoskeleton. The protein localises to the cell junction. The protein resides in the focal adhesion. Its function is as follows. May be involved in the regulation of cellular proliferation and/or differentiation. The chain is Zinc finger protein 185 (Znf185) from Mus musculus (Mouse).